We begin with the raw amino-acid sequence, 729 residues long: 1,4-alpha-glucan branching enzyme GlgB (729 aa).

The Nucleophile role is filled by Asp-405. Glu-458 serves as the catalytic Proton donor.

It belongs to the glycosyl hydrolase 13 family. GlgB subfamily. Monomer.

The catalysed reaction is Transfers a segment of a (1-&gt;4)-alpha-D-glucan chain to a primary hydroxy group in a similar glucan chain.. It participates in glycan biosynthesis; glycogen biosynthesis. Its function is as follows. Catalyzes the formation of the alpha-1,6-glucosidic linkages in glycogen by scission of a 1,4-alpha-linked oligosaccharide from growing alpha-1,4-glucan chains and the subsequent attachment of the oligosaccharide to the alpha-1,6 position. In Mannheimia succiniciproducens (strain KCTC 0769BP / MBEL55E), this protein is 1,4-alpha-glucan branching enzyme GlgB.